A 157-amino-acid polypeptide reads, in one-letter code: dCTP deaminase (157 aa).

Residues 79–84, D95, Q124, and Y138 contribute to the dCTP site; that span reads RSSLAR.

It belongs to the dCTP deaminase family. Homotrimer.

It catalyses the reaction dCTP + H2O + H(+) = dUTP + NH4(+). Its pathway is pyrimidine metabolism; dUMP biosynthesis; dUMP from dCTP (dUTP route): step 1/2. In terms of biological role, catalyzes the deamination of dCTP to dUTP. The polypeptide is dCTP deaminase (Thermococcus gammatolerans (strain DSM 15229 / JCM 11827 / EJ3)).